The chain runs to 1489 residues: Chromosome partition protein MukB (1489 aa).

Position 34–41 (34–41 (GGNGAGKS)) interacts with ATP. Coiled coils occupy residues 326 to 418 (LEAD…QYNQ), 444 to 472 (LETF…QTAH), 509 to 602 (RHLA…QRAP), 780 to 805 (RAAR…ATLS), 835 to 919 (EAEI…GNQL), 977 to 1116 (EMLS…AKAG), and 1209 to 1266 (VEAI…QNVS). The segment at 666–783 (PGGSEDSRLN…TVPIFGRAAR (118 aa)) is flexible hinge.

It belongs to the SMC family. MukB subfamily. As to quaternary structure, homodimerization via its hinge domain. Binds to DNA via its C-terminal region. Interacts, and probably forms a ternary complex, with MukE and MukF via its C-terminal region. The complex formation is stimulated by calcium or magnesium. Interacts with tubulin-related protein FtsZ.

The protein localises to the cytoplasm. It is found in the nucleoid. Its function is as follows. Plays a central role in chromosome condensation, segregation and cell cycle progression. Functions as a homodimer, which is essential for chromosome partition. Involved in negative DNA supercoiling in vivo, and by this means organize and compact chromosomes. May achieve or facilitate chromosome segregation by condensation DNA from both sides of a centrally located replisome during cell division. This is Chromosome partition protein MukB from Citrobacter koseri (strain ATCC BAA-895 / CDC 4225-83 / SGSC4696).